Reading from the N-terminus, the 391-residue chain is Polyketide synthase 3 (391 aa).

Cysteine 164 is a catalytic residue.

Belongs to the thiolase-like superfamily. Chalcone/stilbene synthases family. As to quaternary structure, homodimer.

It catalyses the reaction (E)-4-coumaroyl-CoA + 3 malonyl-CoA + 3 H(+) = 2',4,4',6'-tetrahydroxychalcone + 3 CO2 + 4 CoA. It functions in the pathway secondary metabolite biosynthesis; flavonoid biosynthesis. Functionally, polyketide synthase producing p-coumaryltriacetic acid lactone (CTAL) and slightly naringenin chalcone. Can use p-coumaryl-CoA as substrate. The polypeptide is Polyketide synthase 3 (PKS3) (Rubus idaeus (Raspberry)).